Consider the following 192-residue polypeptide: Glycerol-3-phosphate acyltransferase (192 aa).

5 helical membrane-spanning segments follow: residues 4-24, 48-68, 74-94, 101-121, and 125-145; these read FAIIYMLFTYLLGSISSDVVI, LVLVVFLCDVLKGMLPVWVGY, YFELGMVALAACLGHIFPIFF, GVATAFGAIAPIAWGVAGSML, and LLIFLFSGYVALSTVVTALIL.

It belongs to the PlsY family. Probably interacts with PlsX.

It is found in the cell inner membrane. The enzyme catalyses an acyl phosphate + sn-glycerol 3-phosphate = a 1-acyl-sn-glycero-3-phosphate + phosphate. Its pathway is lipid metabolism; phospholipid metabolism. Catalyzes the transfer of an acyl group from acyl-phosphate (acyl-PO(4)) to glycerol-3-phosphate (G3P) to form lysophosphatidic acid (LPA). This enzyme utilizes acyl-phosphate as fatty acyl donor, but not acyl-CoA or acyl-ACP. The chain is Glycerol-3-phosphate acyltransferase from Histophilus somni (strain 129Pt) (Haemophilus somnus).